The primary structure comprises 772 residues: Acyl-homoserine lactone acylase PvdQ (772 aa).

The N-terminal stretch at 1–28 (MPVFPFCRPMTCAGLAAALVAFSVGVQA) is a signal peptide. Residues 199–220 (AQSSAGFASALARQERFAAERG) constitute a propeptide, spacer peptide. Catalysis depends on Ser221, which acts as the Nucleophile.

This sequence belongs to the peptidase S45 family. Heterodimer of an alpha subunit and a beta subunit processed from the same precursor.

The protein resides in the periplasm. The catalysed reaction is an N-acyl-L-homoserine lactone + H2O = L-homoserine lactone + a carboxylate. Functionally, catalyzes the deacylation of acyl-homoserine lactone (AHL or acyl-HSL), releasing homoserine lactone (HSL) and the corresponding fatty acid. Possesses a specificity for the degradation of long-chain acyl-HSLs (side chains of 11 to 14 carbons in length). This is Acyl-homoserine lactone acylase PvdQ (pvdQ) from Pseudomonas putida (strain ATCC 47054 / DSM 6125 / CFBP 8728 / NCIMB 11950 / KT2440).